Here is a 133-residue protein sequence, read N- to C-terminus: Basic phospholipase A2 beta-bungarotoxin A-AL2 chain (133 aa).

The first 5 residues, 1–5 (FLLGA), serve as a signal peptide directing secretion. Residues 6–13 (ANIPPHPL) constitute a propeptide that is removed on maturation. Cystine bridges form between C40–C132, C42–C58, C57–C113, C64–C106, C74–C99, and C92–C104. Residues Y41, G43, and G45 each coordinate Ca(2+). H61 is an active-site residue. Ca(2+) is bound at residue D62. D107 is a catalytic residue.

The protein belongs to the phospholipase A2 family. Group I subfamily. D49 sub-subfamily. In terms of assembly, heterodimer; disulfide-linked. The A chains have phospholipase A2 activity and the B chains show homology with the basic protease inhibitors. It depends on Ca(2+) as a cofactor. Expressed by the venom gland.

It localises to the secreted. It carries out the reaction a 1,2-diacyl-sn-glycero-3-phosphocholine + H2O = a 1-acyl-sn-glycero-3-phosphocholine + a fatty acid + H(+). Functionally, snake venom phospholipase A2 (PLA2) that inhibits neuromuscular transmission by blocking acetylcholine release from the nerve termini. PLA2 catalyzes the calcium-dependent hydrolysis of the 2-acyl groups in 3-sn-phosphoglycerides. The sequence is that of Basic phospholipase A2 beta-bungarotoxin A-AL2 chain from Bungarus multicinctus (Many-banded krait).